A 203-amino-acid chain; its full sequence is Outer-membrane lipoprotein LolB (203 aa).

The first 16 residues, 1 to 16, serve as a signal peptide directing secretion; the sequence is MKTFLPCLFFLLILVG. Cys-17 carries N-palmitoyl cysteine lipidation. A lipid anchor (S-diacylglycerol cysteine) is attached at Cys-17.

This sequence belongs to the LolB family. As to quaternary structure, monomer.

The protein localises to the cell outer membrane. Functionally, plays a critical role in the incorporation of lipoproteins in the outer membrane after they are released by the LolA protein. This is Outer-membrane lipoprotein LolB from Psychromonas ingrahamii (strain DSM 17664 / CCUG 51855 / 37).